A 419-amino-acid chain; its full sequence is Enolase (419 aa).

Residue Q161 coordinates (2R)-2-phosphoglycerate. E205 functions as the Proton donor in the catalytic mechanism. The Mg(2+) site is built by D240, E283, and D309. Residues K334, R363, S364, and K385 each coordinate (2R)-2-phosphoglycerate. Residue K334 is the Proton acceptor of the active site.

Belongs to the enolase family. The cofactor is Mg(2+).

It is found in the cytoplasm. The protein localises to the secreted. The protein resides in the cell surface. The enzyme catalyses (2R)-2-phosphoglycerate = phosphoenolpyruvate + H2O. It participates in carbohydrate degradation; glycolysis; pyruvate from D-glyceraldehyde 3-phosphate: step 4/5. Catalyzes the reversible conversion of 2-phosphoglycerate (2-PG) into phosphoenolpyruvate (PEP). It is essential for the degradation of carbohydrates via glycolysis. The polypeptide is Enolase (Saccharolobus solfataricus (strain ATCC 35092 / DSM 1617 / JCM 11322 / P2) (Sulfolobus solfataricus)).